The sequence spans 346 residues: Anthranilate phosphoribosyltransferase (346 aa).

Residues G80, 83-84 (GD), T88, 90-93 (NIST), 108-116 (KHGNTAVSS), and S120 contribute to the 5-phospho-alpha-D-ribose 1-diphosphate site. G80 contributes to the anthranilate binding site. A Mg(2+)-binding site is contributed by S92. Anthranilate is bound at residue N111. R166 is a binding site for anthranilate. Positions 225 and 226 each coordinate Mg(2+).

It belongs to the anthranilate phosphoribosyltransferase family. As to quaternary structure, homodimer. Mg(2+) serves as cofactor.

It carries out the reaction N-(5-phospho-beta-D-ribosyl)anthranilate + diphosphate = 5-phospho-alpha-D-ribose 1-diphosphate + anthranilate. Its pathway is amino-acid biosynthesis; L-tryptophan biosynthesis; L-tryptophan from chorismate: step 2/5. Catalyzes the transfer of the phosphoribosyl group of 5-phosphorylribose-1-pyrophosphate (PRPP) to anthranilate to yield N-(5'-phosphoribosyl)-anthranilate (PRA). This is Anthranilate phosphoribosyltransferase from Desulforudis audaxviator (strain MP104C).